A 204-amino-acid chain; its full sequence is Prephenate decarboxylase (204 aa).

Belongs to the prephenate decarboxylase family.

Its subcellular location is the cytoplasm. It catalyses the reaction prephenate + H(+) = 3-[(4R)-4-hydroxycyclohexa-1,5-dien-1-yl]-2-oxopropanoate + CO2. Its pathway is antibiotic biosynthesis; bacilysin biosynthesis. Its function is as follows. Part of the bacABCDEF operon responsible for the biosynthesis of the nonribosomally synthesized dipeptide antibiotic bacilysin, composed of L-alanine and L-anticapsin. Bacilysin is an irreversible inactivator of the glutaminase domain of glucosamine synthetase. BacA is an unusual prephenate decarboxylase that avoids the typical aromatization of the cyclohexadienol ring of prephenate. BacA catalyzes the protonation of prephenate (1-carboxy-4-hydroxy-alpha-oxo-2,5-cyclohexadiene-1-propanoic acid) at C6 position, followed by a decarboxylation to produce the endocyclic-delta(4),delta(8)-7R-dihydro-hydroxyphenylpyruvate (en-H2HPP). En-H2HPP is able to undergo a slow nonenzymatic isomerization to produce the exocyclic-delta(3),delta(5)-dihydro-hydroxyphenylpyruvate (ex-H2HPP). BacA isomerizes only the pro-R double bond in prephenate. The protein is Prephenate decarboxylase of Bacillus amyloliquefaciens (Bacillus velezensis).